Consider the following 236-residue polypeptide: Small ribosomal subunit protein uS2c (236 aa).

This sequence belongs to the universal ribosomal protein uS2 family.

The protein resides in the plastid. It is found in the chloroplast. The protein is Small ribosomal subunit protein uS2c (rps2) of Gossypium barbadense (Sea Island cotton).